The primary structure comprises 584 residues: Aspartate--tRNA(Asp/Asn) ligase (584 aa).

Glutamate 177 provides a ligand contact to L-aspartate. Residues 201–204 (QLFK) form an aspartate region. Arginine 223 contacts L-aspartate. Residues 223-225 (RDE) and glutamine 232 each bind ATP. Histidine 447 contributes to the L-aspartate binding site. Residue glutamate 481 coordinates ATP. Residue arginine 488 coordinates L-aspartate. ATP is bound at residue 533-536 (GLDR).

It belongs to the class-II aminoacyl-tRNA synthetase family. Type 1 subfamily. Homodimer.

Its subcellular location is the cytoplasm. It carries out the reaction tRNA(Asx) + L-aspartate + ATP = L-aspartyl-tRNA(Asx) + AMP + diphosphate. Its function is as follows. Aspartyl-tRNA synthetase with relaxed tRNA specificity since it is able to aspartylate not only its cognate tRNA(Asp) but also tRNA(Asn). Reaction proceeds in two steps: L-aspartate is first activated by ATP to form Asp-AMP and then transferred to the acceptor end of tRNA(Asp/Asn). The polypeptide is Aspartate--tRNA(Asp/Asn) ligase (Chlamydia caviae (strain ATCC VR-813 / DSM 19441 / 03DC25 / GPIC) (Chlamydophila caviae)).